The following is a 169-amino-acid chain: Ribosome maturation factor RimM (169 aa).

The 73-residue stretch at 97–169 (EDEVYFKDLI…KIVVDWEYDY (73 aa)) folds into the PRC barrel domain.

The protein belongs to the RimM family. In terms of assembly, binds ribosomal protein uS19.

Its subcellular location is the cytoplasm. Functionally, an accessory protein needed during the final step in the assembly of 30S ribosomal subunit, possibly for assembly of the head region. Essential for efficient processing of 16S rRNA. May be needed both before and after RbfA during the maturation of 16S rRNA. It has affinity for free ribosomal 30S subunits but not for 70S ribosomes. The polypeptide is Ribosome maturation factor RimM (Francisella tularensis subsp. tularensis (strain WY96-3418)).